The sequence spans 152 residues: NADH-quinone oxidoreductase subunit A 2 (152 aa).

Helical transmembrane passes span 8 to 28 (FGKVFLFLLFGVVFVIGGYVS), 63 to 83 (FYVVALIFIIFDVEVLFLFPW), and 90 to 110 (LGGFALFEAVIFVTILTLGLV).

The protein belongs to the complex I subunit 3 family. As to quaternary structure, NDH-1 is composed of 14 different subunits. Subunits NuoA, H, J, K, L, M, N constitute the membrane sector of the complex.

It is found in the cell inner membrane. The catalysed reaction is a quinone + NADH + 5 H(+)(in) = a quinol + NAD(+) + 4 H(+)(out). Functionally, NDH-1 shuttles electrons from NADH, via FMN and iron-sulfur (Fe-S) centers, to quinones in the respiratory chain. The immediate electron acceptor for the enzyme in this species is believed to be a menaquinone. Couples the redox reaction to proton translocation (for every two electrons transferred, four hydrogen ions are translocated across the cytoplasmic membrane), and thus conserves the redox energy in a proton gradient. In Chloroherpeton thalassium (strain ATCC 35110 / GB-78), this protein is NADH-quinone oxidoreductase subunit A 2.